Consider the following 122-residue polypeptide: Flagellar protein FliT (122 aa).

The required for homodimerization stretch occupies residues 1-50 (MTSTVEFINRWQRIALLSQSLLELAQRGEWDLLLQQEVSYLQRIETVMEK). A fliD binding region spans residues 60 to 98 (IQDMVAGYIKQTLDNEQLLKGLLQQRLDELSSLIGQSTR).

This sequence belongs to the FliT family. As to quaternary structure, homodimer. Interacts with FliD and FlhC.

It is found in the cytoplasm. It localises to the cytosol. In terms of biological role, dual-function protein that regulates the transcription of class 2 flagellar operons and that also acts as an export chaperone for the filament-capping protein FliD. As a transcriptional regulator, acts as an anti-FlhDC factor; it directly binds FlhC, thus inhibiting the binding of the FlhC/FlhD complex to class 2 promoters, resulting in decreased expression of class 2 flagellar operons. As a chaperone, effects FliD transition to the membrane by preventing its premature polymerization, and by directing it to the export apparatus. The sequence is that of Flagellar protein FliT from Salmonella paratyphi A (strain AKU_12601).